Here is a 214-residue protein sequence, read N- to C-terminus: Pyrrolidone-carboxylate peptidase (214 aa).

Catalysis depends on residues E80, C143, and H166.

This sequence belongs to the peptidase C15 family. In terms of assembly, homotetramer.

The protein localises to the cytoplasm. The catalysed reaction is Release of an N-terminal pyroglutamyl group from a polypeptide, the second amino acid generally not being Pro.. In terms of biological role, removes 5-oxoproline from various penultimate amino acid residues except L-proline. In Escherichia fergusonii (strain ATCC 35469 / DSM 13698 / CCUG 18766 / IAM 14443 / JCM 21226 / LMG 7866 / NBRC 102419 / NCTC 12128 / CDC 0568-73), this protein is Pyrrolidone-carboxylate peptidase.